A 300-amino-acid polypeptide reads, in one-letter code: MRVLSEIAESPFVISRLSPDSTATGGFIGGWVGKCHGFLHNTVLVLASILFVAYLAYEAKKSLSKLSNRRSYIMIAYYGFLWLVSLLNLAWCCLQAWECTPGKEVIWNLLTLFTTSGMLFLEVSLVAFLFQGNYASGAEALTRTFLISGLVIGLDLLLKAIYLFGFGVPLFIDNNEHIHKFKWGLWVIHKLLLAGIYGMIFFMYNSKWRERLPARPAFYKYITVMLALNGLSLFACALTANGAHFGLWLYGITSVCYHAFYLPLLYVTFLADFFQEEDLNLENVYYSEMKDAGFFDADWE.

7 helical membrane-spanning segments follow: residues 37–57, 73–93, 110–130, 152–172, 183–203, 222–242, and 245–265; these read GFLH…YLAY, IMIA…AWCC, LTLF…AFLF, IGLD…PLFI, WGLW…IFFM, ITVM…TANG, and FGLW…LPLL.

Belongs to the UPF0359 family. As to quaternary structure, interacts with GPA1. Expressed at low levels in seedlings.

It is found in the cell membrane. In terms of biological role, plays a role in plants and microbes interactions. G-protein coupled melatonin receptor involved in root growth mediated by the bacterial quorum-sensing signals N-acyl-homoserine lactones (AHLs). Binds to melatonin. Phytomelatonin receptor required, in collaboration with GPA1, for melatonin-mediated stomatal closure involving H(2)O(2) and Ca(2+) signals. Essential for melatonin-mediated plant response to osmotic stress probably by activating reactive oxygen species (ROS) scavenging ability. This Arabidopsis thaliana (Mouse-ear cress) protein is Protein CANDIDATE G-PROTEIN COUPLED RECEPTOR 2.